Consider the following 303-residue polypeptide: UDP-3-O-acyl-N-acetylglucosamine deacetylase (303 aa).

Residues H78, H237, and D241 each contribute to the Zn(2+) site. H264 functions as the Proton donor in the catalytic mechanism.

Belongs to the LpxC family. Zn(2+) is required as a cofactor.

It carries out the reaction a UDP-3-O-[(3R)-3-hydroxyacyl]-N-acetyl-alpha-D-glucosamine + H2O = a UDP-3-O-[(3R)-3-hydroxyacyl]-alpha-D-glucosamine + acetate. Its pathway is glycolipid biosynthesis; lipid IV(A) biosynthesis; lipid IV(A) from (3R)-3-hydroxytetradecanoyl-[acyl-carrier-protein] and UDP-N-acetyl-alpha-D-glucosamine: step 2/6. Functionally, catalyzes the hydrolysis of UDP-3-O-myristoyl-N-acetylglucosamine to form UDP-3-O-myristoylglucosamine and acetate, the committed step in lipid A biosynthesis. The chain is UDP-3-O-acyl-N-acetylglucosamine deacetylase from Coxiella burnetii (strain CbuK_Q154) (Coxiella burnetii (strain Q154)).